A 368-amino-acid polypeptide reads, in one-letter code: MAARSELLRSAFGKASPSLGWFIVNPHRYSYRWWHMFLIMLVLYSAWASPFELSMEKAASIALVVIRPSGRCLLRHRHCHILLRHLVTGKRQGLWGLLNLLRLWRLRCASKLFARVEKDVRFSYLWTRLIKLLCVTLFALHFAACIYLWMVFNYKIKELTWIGSQIHSFEDRSVWFCYTCAVYWSITTLATVGYGDLHATNIGEMLFSIAFMLFNMGLTSYIIGNITNLVVRETSNTFKMRDMVQWVSEFGSMNRLPEVMREQMLANGQLRFRTKEQLQHEHVKRIGPRGMVGEIGVMFSIPQPFTIRSRRLTQVVRISHIHLLQAVRPNTADGCIVFSNFILVSDFVEYLESLKVQTKEVAFVSGHL.

The next 3 membrane-spanning stretches (helical) occupy residues 33–53 (WWHM…PFEL), 97–117 (LLNL…ARVE), and 132–152 (LLCV…WMVF). An intramembrane region (pore-forming) is located at residues 180–199 (CAVYWSITTLATVGYGDLHA). Residues 206–226 (LFSIAFMLFNMGLTSYIIGNI) form a helical membrane-spanning segment. Residue 225-344 (NITNLVVRET…CIVFSNFILV (120 aa)) participates in a nucleoside 3',5'-cyclic phosphate binding.

Belongs to the potassium channel family. Plant (TC 1.A.1.4) subfamily.

It localises to the membrane. Functionally, putative inward-rectifying potassium channel. This chain is Putative potassium channel KAT5, found in Oryza sativa subsp. japonica (Rice).